Reading from the N-terminus, the 58-residue chain is Single-pass membrane and coiled-coil domain-containing protein 4 homolog (58 aa).

The stretch at 1–31 (MRQLKGKVKETRKQKKERKLDNLETQAKIRT) forms a coiled coil. A helical membrane pass occupies residues 31-51 (TVVLPALGVLAVFLVLFVYLK).

This sequence belongs to the SMCO4 family.

It is found in the membrane. The polypeptide is Single-pass membrane and coiled-coil domain-containing protein 4 homolog (Drosophila melanogaster (Fruit fly)).